A 238-amino-acid polypeptide reads, in one-letter code: Large ribosomal subunit protein uL2 (238 aa).

The interval 199-238 (PHGGGLHQSVSRPSTVSRNAPPGRKVGHIAARRTGRKEGA) is disordered. The segment covering 206 to 216 (QSVSRPSTVSR) has biased composition (polar residues). Basic residues predominate over residues 223 to 238 (KVGHIAARRTGRKEGA).

It belongs to the universal ribosomal protein uL2 family. In terms of assembly, part of the 50S ribosomal subunit. Forms a bridge to the 30S subunit in the 70S ribosome.

Functionally, one of the primary rRNA binding proteins. Required for association of the 30S and 50S subunits to form the 70S ribosome, for tRNA binding and peptide bond formation. It has been suggested to have peptidyltransferase activity; this is somewhat controversial. Makes several contacts with the 16S rRNA in the 70S ribosome. The chain is Large ribosomal subunit protein uL2 from Sulfurisphaera tokodaii (strain DSM 16993 / JCM 10545 / NBRC 100140 / 7) (Sulfolobus tokodaii).